A 277-amino-acid chain; its full sequence is Large ribosomal subunit protein uL2 (277 aa).

Disordered regions lie at residues 37-58 and 222-277; these read LHSK…GGGH and GVAM…NRRR. Basic residues predominate over residues 268–277; the sequence is VRRRKQNRRR.

Belongs to the universal ribosomal protein uL2 family. Part of the 50S ribosomal subunit. Forms a bridge to the 30S subunit in the 70S ribosome.

Functionally, one of the primary rRNA binding proteins. Required for association of the 30S and 50S subunits to form the 70S ribosome, for tRNA binding and peptide bond formation. It has been suggested to have peptidyltransferase activity; this is somewhat controversial. Makes several contacts with the 16S rRNA in the 70S ribosome. The protein is Large ribosomal subunit protein uL2 of Parafrankia sp. (strain EAN1pec).